We begin with the raw amino-acid sequence, 360 residues long: DNA replication and repair protein RecF (360 aa).

30-37 provides a ligand contact to ATP; it reads GRNAQGKT.

This sequence belongs to the RecF family.

It localises to the cytoplasm. In terms of biological role, the RecF protein is involved in DNA metabolism; it is required for DNA replication and normal SOS inducibility. RecF binds preferentially to single-stranded, linear DNA. It also seems to bind ATP. This Desulforudis audaxviator (strain MP104C) protein is DNA replication and repair protein RecF.